The chain runs to 216 residues: UPF0193 protein EVG1 homolog (216 aa).

This sequence belongs to the UPF0193 (EVG1) family.

The protein is UPF0193 protein EVG1 homolog of Mus musculus (Mouse).